The sequence spans 616 residues: Chaperone protein HtpG (616 aa).

The a; substrate-binding stretch occupies residues 1-333 (MKKQFDTEVN…CQDLPLNVSR (333 aa)). The b stretch occupies residues 334–542 (EILQQNKILS…SNDPTYQMQK (209 aa)). The tract at residues 543–616 (IMLSMGQEVK…INEFIEKDFL (74 aa)) is c.

This sequence belongs to the heat shock protein 90 family. In terms of assembly, homodimer.

Its subcellular location is the cytoplasm. Functionally, molecular chaperone. Has ATPase activity. The chain is Chaperone protein HtpG from Borreliella burgdorferi (strain ATCC 35210 / DSM 4680 / CIP 102532 / B31) (Borrelia burgdorferi).